Here is a 579-residue protein sequence, read N- to C-terminus: 2-isopropylmalate synthase (579 aa).

One can recognise a Pyruvate carboxyltransferase domain in the interval P33–N308. Residues D42, H247, H249, and N283 each contribute to the Mg(2+) site. Residues S450–R579 form a regulatory domain region.

It belongs to the alpha-IPM synthase/homocitrate synthase family. LeuA type 2 subfamily. Homodimer. Mg(2+) serves as cofactor.

It localises to the cytoplasm. The catalysed reaction is 3-methyl-2-oxobutanoate + acetyl-CoA + H2O = (2S)-2-isopropylmalate + CoA + H(+). It functions in the pathway amino-acid biosynthesis; L-leucine biosynthesis; L-leucine from 3-methyl-2-oxobutanoate: step 1/4. Functionally, catalyzes the condensation of the acetyl group of acetyl-CoA with 3-methyl-2-oxobutanoate (2-ketoisovalerate) to form 3-carboxy-3-hydroxy-4-methylpentanoate (2-isopropylmalate). This chain is 2-isopropylmalate synthase, found in Streptosporangium roseum (strain ATCC 12428 / DSM 43021 / JCM 3005 / KCTC 9067 / NCIMB 10171 / NRRL 2505 / NI 9100).